Reading from the N-terminus, the 284-residue chain is Phosphonates import ATP-binding protein PhnC 2 (284 aa).

The ABC transporter domain occupies 24–264 (IRIDGISVRR…LEARIFPSLA (241 aa)). 56–63 (GPSGVGKT) is an ATP binding site.

Belongs to the ABC transporter superfamily. Phosphonates importer (TC 3.A.1.9.1) family. In terms of assembly, the complex is composed of two ATP-binding proteins (PhnC), two transmembrane proteins (PhnE) and a solute-binding protein (PhnD).

It localises to the cell inner membrane. The catalysed reaction is phosphonate(out) + ATP + H2O = phosphonate(in) + ADP + phosphate + H(+). Its function is as follows. Part of the ABC transporter complex PhnCDE involved in phosphonates import. Responsible for energy coupling to the transport system. The chain is Phosphonates import ATP-binding protein PhnC 2 from Rhodopseudomonas palustris (strain ATCC BAA-98 / CGA009).